Reading from the N-terminus, the 215-residue chain is Large ribosomal subunit protein uL4 (215 aa).

The disordered stretch occupies residues 43 to 97 (RRQGTHSTKTRAEVSGGGKKPWRQKGTGRARAGSTRSPIWVGGGKTHTPKPRDYS).

Belongs to the universal ribosomal protein uL4 family. As to quaternary structure, part of the 50S ribosomal subunit.

Its function is as follows. One of the primary rRNA binding proteins, this protein initially binds near the 5'-end of the 23S rRNA. It is important during the early stages of 50S assembly. It makes multiple contacts with different domains of the 23S rRNA in the assembled 50S subunit and ribosome. Functionally, forms part of the polypeptide exit tunnel. This is Large ribosomal subunit protein uL4 from Brachyspira hyodysenteriae (strain ATCC 49526 / WA1).